The following is a 194-amino-acid chain: Small ribosomal subunit protein uS7 (194 aa).

This sequence belongs to the universal ribosomal protein uS7 family. In terms of assembly, part of the 30S ribosomal subunit.

In terms of biological role, one of the primary rRNA binding proteins, it binds directly to 16S rRNA where it nucleates assembly of the head domain of the 30S subunit. Is located at the subunit interface close to the decoding center. This is Small ribosomal subunit protein uS7 from Methanocorpusculum labreanum (strain ATCC 43576 / DSM 4855 / Z).